Here is a 272-residue protein sequence, read N- to C-terminus: Shikimate dehydrogenase (NADP(+)) (272 aa).

Residues 14-16 (SKS) and T61 each bind shikimate. K65 serves as the catalytic Proton acceptor. E77 contributes to the NADP(+) binding site. Residues N86 and D102 each contribute to the shikimate site. Residues 126–130 (GAGGA), 149–154 (NRTVSR), and M213 each bind NADP(+). Residue Y215 coordinates shikimate. Residue G237 coordinates NADP(+).

This sequence belongs to the shikimate dehydrogenase family. In terms of assembly, homodimer.

It catalyses the reaction shikimate + NADP(+) = 3-dehydroshikimate + NADPH + H(+). Its pathway is metabolic intermediate biosynthesis; chorismate biosynthesis; chorismate from D-erythrose 4-phosphate and phosphoenolpyruvate: step 4/7. Functionally, involved in the biosynthesis of the chorismate, which leads to the biosynthesis of aromatic amino acids. Catalyzes the reversible NADPH linked reduction of 3-dehydroshikimate (DHSA) to yield shikimate (SA). This Escherichia coli (strain K12 / MC4100 / BW2952) protein is Shikimate dehydrogenase (NADP(+)).